A 192-amino-acid polypeptide reads, in one-letter code: Peptidyl-tRNA hydrolase (192 aa).

A tRNA-binding site is contributed by Y14. Catalysis depends on H19, which acts as the Proton acceptor. TRNA-binding residues include Y64, N66, and N112.

Belongs to the PTH family. In terms of assembly, monomer.

The protein resides in the cytoplasm. It catalyses the reaction an N-acyl-L-alpha-aminoacyl-tRNA + H2O = an N-acyl-L-amino acid + a tRNA + H(+). In terms of biological role, hydrolyzes ribosome-free peptidyl-tRNAs (with 1 or more amino acids incorporated), which drop off the ribosome during protein synthesis, or as a result of ribosome stalling. Functionally, catalyzes the release of premature peptidyl moieties from peptidyl-tRNA molecules trapped in stalled 50S ribosomal subunits, and thus maintains levels of free tRNAs and 50S ribosomes. The sequence is that of Peptidyl-tRNA hydrolase from Anaeromyxobacter dehalogenans (strain 2CP-1 / ATCC BAA-258).